The primary structure comprises 111 residues: Nucleoid-associated protein Cphamn1_1179 (111 aa).

Belongs to the YbaB/EbfC family. As to quaternary structure, homodimer.

It is found in the cytoplasm. It localises to the nucleoid. Functionally, binds to DNA and alters its conformation. May be involved in regulation of gene expression, nucleoid organization and DNA protection. This is Nucleoid-associated protein Cphamn1_1179 from Chlorobium phaeobacteroides (strain BS1).